The primary structure comprises 514 residues: 2-isopropylmalate synthase (514 aa).

In terms of domain architecture, Pyruvate carboxyltransferase spans 5–267; it reads LVIFDTTLRD…DTRIHTPEIL (263 aa). The Mn(2+) site is built by Asp-14, His-202, His-204, and Asn-238. Residues 394–514 form a regulatory domain region; the sequence is RLVALKVGTQ…GSKEHPQAHV (121 aa).

It belongs to the alpha-IPM synthase/homocitrate synthase family. LeuA type 1 subfamily. As to quaternary structure, homodimer. Mn(2+) is required as a cofactor.

Its subcellular location is the cytoplasm. It carries out the reaction 3-methyl-2-oxobutanoate + acetyl-CoA + H2O = (2S)-2-isopropylmalate + CoA + H(+). It participates in amino-acid biosynthesis; L-leucine biosynthesis; L-leucine from 3-methyl-2-oxobutanoate: step 1/4. Its function is as follows. Catalyzes the condensation of the acetyl group of acetyl-CoA with 3-methyl-2-oxobutanoate (2-ketoisovalerate) to form 3-carboxy-3-hydroxy-4-methylpentanoate (2-isopropylmalate). This is 2-isopropylmalate synthase from Hydrogenovibrio crunogenus (strain DSM 25203 / XCL-2) (Thiomicrospira crunogena).